The sequence spans 309 residues: Glutaminase (309 aa).

The substrate site is built by serine 64, asparagine 114, glutamate 160, asparagine 167, tyrosine 191, tyrosine 243, and valine 261.

The protein belongs to the glutaminase family. Homotetramer.

The catalysed reaction is L-glutamine + H2O = L-glutamate + NH4(+). The protein is Glutaminase of Methylorubrum extorquens (strain CM4 / NCIMB 13688) (Methylobacterium extorquens).